The following is a 470-amino-acid chain: BTB/POZ domain-containing protein 17 (470 aa).

An N-terminal signal peptide occupies residues 1–18; the sequence is MRMKGLYVVPLLLALVES. In terms of domain architecture, BTB spans 53 to 122; sequence SDTTLRIRTA…FYCGEISVNL (70 aa). Positions 161-261 constitute a BACK domain; it reads VVSWYHYALR…ITPSQLFQIQ (101 aa).

Its subcellular location is the secreted. The chain is BTB/POZ domain-containing protein 17 (btbd17) from Xenopus laevis (African clawed frog).